Consider the following 58-residue polypeptide: Small ribosomal subunit protein bS21 (58 aa).

The interval 37–58 (FYDKPSVKKRAKSKAAAKYRGR) is disordered. Over residues 43–58 (VKKRAKSKAAAKYRGR) the composition is skewed to basic residues.

Belongs to the bacterial ribosomal protein bS21 family.

The chain is Small ribosomal subunit protein bS21 (rpsU) from Chlamydia muridarum (strain MoPn / Nigg).